The chain runs to 123 residues: MLKEFKTFIARGNVIDMAVGIIVGAAFTSIVKSLVNNLINPLIGLFIGRIDLSNLVLTVGDAQFKYGSFLNAVINFLIISFVVFLMVKAINTFRKKEDKKTEAPSEEVMYLKEITELLKKNKE.

Transmembrane regions (helical) follow at residues 14 to 34 (VIDMAVGIIVGAAFTSIVKSL) and 67 to 87 (GSFLNAVINFLIISFVVFLMV).

This sequence belongs to the MscL family. In terms of assembly, homopentamer.

Its subcellular location is the cell membrane. Channel that opens in response to stretch forces in the membrane lipid bilayer. May participate in the regulation of osmotic pressure changes within the cell. This is Large-conductance mechanosensitive channel from Limosilactobacillus reuteri (strain DSM 20016) (Lactobacillus reuteri).